A 130-amino-acid polypeptide reads, in one-letter code: Small ribosomal subunit protein uS9 (130 aa).

A disordered region spans residues 108–130 (SREVERKKVGLRKARKRPQYSKR). Over residues 116–130 (VGLRKARKRPQYSKR) the composition is skewed to basic residues.

The protein belongs to the universal ribosomal protein uS9 family.

This chain is Small ribosomal subunit protein uS9, found in Cellvibrio japonicus (strain Ueda107) (Pseudomonas fluorescens subsp. cellulosa).